Here is a 308-residue protein sequence, read N- to C-terminus: Taste receptor type 2 member 41 (308 aa).

Topologically, residues 1–7 (MLPTLSV) are extracellular. A helical membrane pass occupies residues 8–28 (FFMLTFVLLCFLGILANGFIV). The Cytoplasmic portion of the chain corresponds to 29–60 (LMLSREWLLRGRLLPSDMILFSLGTSRFFQQC). A helical transmembrane segment spans residues 61-81 (VGLVNSFYYFLHLVEYSGSLA). The Extracellular segment spans residues 82–88 (RQLISLH). A helical transmembrane segment spans residues 89 to 109 (WDFLNSATFWFCTWLSVLFCI). Topologically, residues 110–128 (KIANFSHPAFLWLKWRFPA) are cytoplasmic. Residues 129 to 149 (LVPWFLLGSILVSVIVTLLFF) form a helical membrane-spanning segment. Residues 150–186 (WGNHTIYQAFLRRKFTGNTTFKEWNRRLEIDYFMPLK) are Extracellular-facing. Asn152 and Asn167 each carry an N-linked (GlcNAc...) asparagine glycan. Residues 187-207 (VVTMSIPCSLFLVSILLLISS) traverse the membrane as a helical segment. Over 208-239 (LRRHSLRMQHNTHSLQDPNVQAHSRALKSLIS) the chain is Cytoplasmic. Residues 240-260 (FLVLYAVSFVSMIIDATVFIS) traverse the membrane as a helical segment. The Extracellular portion of the chain corresponds to 261 to 264 (SDNV). A helical transmembrane segment spans residues 265–285 (WYWPWQIILYFCMSVHPFILI). Topologically, residues 286-308 (TNNLRFRGTFRQLLLLARGFWVA) are cytoplasmic.

It belongs to the G-protein coupled receptor T2R family. As to expression, expressed in subsets of taste receptor cells of the tongue and palate epithelium and exclusively in gustducin-positive cells.

It is found in the membrane. Functionally, receptor that may play a role in the perception of bitterness and is gustducin-linked. May play a role in sensing the chemical composition of the gastrointestinal content. The activity of this receptor may stimulate alpha gustducin, mediate PLC-beta-2 activation and lead to the gating of TRPM5. This is Taste receptor type 2 member 41 (Tas2r41) from Mus musculus (Mouse).